Reading from the N-terminus, the 1372-residue chain is DNA-directed RNA polymerase subunit beta'' (1372 aa).

The Zn(2+) site is built by Cys-252, Cys-321, Cys-328, and Cys-331.

This sequence belongs to the RNA polymerase beta' chain family. RpoC2 subfamily. As to quaternary structure, in plastids the minimal PEP RNA polymerase catalytic core is composed of four subunits: alpha, beta, beta', and beta''. When a (nuclear-encoded) sigma factor is associated with the core the holoenzyme is formed, which can initiate transcription. Requires Zn(2+) as cofactor.

Its subcellular location is the plastid. The protein localises to the organellar chromatophore. It carries out the reaction RNA(n) + a ribonucleoside 5'-triphosphate = RNA(n+1) + diphosphate. In terms of biological role, DNA-dependent RNA polymerase catalyzes the transcription of DNA into RNA using the four ribonucleoside triphosphates as substrates. The protein is DNA-directed RNA polymerase subunit beta'' of Paulinella chromatophora.